A 145-amino-acid chain; its full sequence is Lysozyme-like protein 4 (145 aa).

The signal sequence occupies residues 1-19; that stretch reads MKASVVLSLIGYLVVPSDT. A C-type lysozyme domain is found at 20–145; sequence AVLGRCVVAK…LARWLDGCKL (126 aa). Disulfide bonds link Cys-25/Cys-143, Cys-49/Cys-130, Cys-84/Cys-95, and Cys-91/Cys-109. Residue Glu-54 is part of the active site.

It belongs to the glycosyl hydrolase 22 family. In terms of assembly, monomer.

The protein localises to the secreted. The protein resides in the cytoplasmic vesicle. Its subcellular location is the secretory vesicle. It localises to the acrosome. It is found in the cell projection. The protein localises to the cilium. The protein resides in the flagellum. Its function is as follows. May be involved in fertilization. Has no detectable bacteriolytic and lysozyme activities in vitro. This Bos taurus (Bovine) protein is Lysozyme-like protein 4 (LYZL4).